Here is a 571-residue protein sequence, read N- to C-terminus: Phosphoenolpyruvate-protein phosphotransferase (571 aa).

Residue H207 is the Tele-phosphohistidine intermediate of the active site. R312 and R348 together coordinate phosphoenolpyruvate. 2 residues coordinate Mg(2+): E435 and D459. Phosphoenolpyruvate-binding positions include 458–459 (ND) and R469. C506 (proton donor) is an active-site residue.

This sequence belongs to the PEP-utilizing enzyme family. As to quaternary structure, homodimer. Requires Mg(2+) as cofactor.

It is found in the cytoplasm. The catalysed reaction is L-histidyl-[protein] + phosphoenolpyruvate = N(pros)-phospho-L-histidyl-[protein] + pyruvate. In terms of biological role, general (non sugar-specific) component of the phosphoenolpyruvate-dependent sugar phosphotransferase system (sugar PTS). This major carbohydrate active-transport system catalyzes the phosphorylation of incoming sugar substrates concomitantly with their translocation across the cell membrane. Enzyme I transfers the phosphoryl group from phosphoenolpyruvate (PEP) to the phosphoryl carrier protein (HPr). The chain is Phosphoenolpyruvate-protein phosphotransferase (ptsI) from Chlamydia trachomatis serovar D (strain ATCC VR-885 / DSM 19411 / UW-3/Cx).